Reading from the N-terminus, the 440-residue chain is MFLAQEIIRKKRDGQALSEEEIRFFINGIRDNVVSEGQIAALAMTIYFHDMSMPERVALTMAMRDSGTVLNWKSLNLNGPMVDKHSTGGVGDVTSLMLGPMVAACGGYVPMISGRGLGHTGGTLDKLEAIPGFDIFPDDSAFRKIIQDVGVAIIGQTSSLAPADKRFYATRDITATVDSIPLITASILAKKLAEGLDALVMDVKVGSGAFMPTYQLSEDLAKAIVGVANGAGCKTTALLTDMNQVLASSAGNAVEVREAVRFLTGEYRNPRLLEVTMALCVEMLLSGGLAQNDADARAKLQAVLDNGKAAEIFGRMVAAQKGPSDFVERYDSYLPAAMLSKPVFAERSGIITAMDTRALGMAVVSLGGGRRRATDPIDYSVGLTEMARLGASVDGQQPLAVIHANNEDDWQQAADAVRAAITLGQKAAEETPVVYRRITE.

The protein belongs to the thymidine/pyrimidine-nucleoside phosphorylase family. As to quaternary structure, homodimer.

The enzyme catalyses thymidine + phosphate = 2-deoxy-alpha-D-ribose 1-phosphate + thymine. It functions in the pathway pyrimidine metabolism; dTMP biosynthesis via salvage pathway; dTMP from thymine: step 1/2. Its function is as follows. The enzymes which catalyze the reversible phosphorolysis of pyrimidine nucleosides are involved in the degradation of these compounds and in their utilization as carbon and energy sources, or in the rescue of pyrimidine bases for nucleotide synthesis. This Yersinia enterocolitica serotype O:8 / biotype 1B (strain NCTC 13174 / 8081) protein is Thymidine phosphorylase.